Consider the following 424-residue polypeptide: MLDLRYIRENAEAVKKNCRDRGVEADVDLVVELADRRSALIRELEGLRARQNQLAKAVAKERDERSRGRLIEESRELKGLIPRREEELRGVEERLAEEQLKIPNMTHPEAPVGRDDSENVEIRRWGEAPEFGFEPKDHVELGEALGIIDFDAGAKTTGSKFYFLRGEAVLLELGLVRFALDLLAGRGYELAMTPDLARDRMLLGTGFVPRGPETQIYSVENTDLSLIATAEITLAGQLVDEIVAEESLPRRFAGLSHCFRTEAGAHGRASRGLYRVHQFTKVEMFAFTTPEQSGEMHEEMLSIEEEIFRTLEIPYRVVDICTGDLGAAAYRKYDVEAWMPGRGDYGEVTSTSNTTDYQARRLGIRYRPEGGRPRLLHTLNGTAIAVSRTMIALLENHQREDGSVALPEALVPYVGREVIGPARR.

229–231 (TAE) is a binding site for L-serine. Residues 260–262 (RTE) and V276 each bind ATP. E283 contributes to the L-serine binding site. Position 347–350 (347–350 (EVTS)) interacts with ATP. T382 is an L-serine binding site.

It belongs to the class-II aminoacyl-tRNA synthetase family. Type-1 seryl-tRNA synthetase subfamily. As to quaternary structure, homodimer. The tRNA molecule binds across the dimer.

It is found in the cytoplasm. The catalysed reaction is tRNA(Ser) + L-serine + ATP = L-seryl-tRNA(Ser) + AMP + diphosphate + H(+). The enzyme catalyses tRNA(Sec) + L-serine + ATP = L-seryl-tRNA(Sec) + AMP + diphosphate + H(+). Its pathway is aminoacyl-tRNA biosynthesis; selenocysteinyl-tRNA(Sec) biosynthesis; L-seryl-tRNA(Sec) from L-serine and tRNA(Sec): step 1/1. In terms of biological role, catalyzes the attachment of serine to tRNA(Ser). Is also able to aminoacylate tRNA(Sec) with serine, to form the misacylated tRNA L-seryl-tRNA(Sec), which will be further converted into selenocysteinyl-tRNA(Sec). The protein is Serine--tRNA ligase of Rubrobacter xylanophilus (strain DSM 9941 / JCM 11954 / NBRC 16129 / PRD-1).